Here is a 1006-residue protein sequence, read N- to C-terminus: DNA ligase 4 (1006 aa).

Positions 1–36 are disordered; it reads MDSDDDYNGPADTNPRLEDEESDLDEKYPNRPRNHS. E318, K320, L321, R325, E387, F427, E487, K492, K509, and K511 together coordinate ATP. K320 functions as the N6-AMP-lysine intermediate in the catalytic mechanism. E387 contacts Mg(2+). Position 487 (E487) interacts with Mg(2+). 2 consecutive BRCT domains span residues 718–811 and 890–1002; these read PSGN…PDSL and PSGW…GFQP.

This sequence belongs to the ATP-dependent DNA ligase family. It depends on Mg(2+) as a cofactor.

The protein localises to the nucleus. It carries out the reaction ATP + (deoxyribonucleotide)n-3'-hydroxyl + 5'-phospho-(deoxyribonucleotide)m = (deoxyribonucleotide)n+m + AMP + diphosphate.. Functionally, DNA ligase involved in DNA non-homologous end joining (NHEJ); required for double-strand break (DSB) repair. This Aspergillus oryzae (strain ATCC 42149 / RIB 40) (Yellow koji mold) protein is DNA ligase 4 (lig4).